A 274-amino-acid chain; its full sequence is MAINLYKTSTPSTRNGAVDSQVKSNPRNNLIYGQHHCGKGRNARGIITVRHRGGGHKRLYRKIDFRRNAKDIYGRIVTIEYDPNRNAYICLIHYGDGEKRYILHPRGAIIGDTIVSGTEVPIKMGNALPLTDMPLGTAIHNIEITLGKGGQLARAAGAVAKLIAKEGKSATLKLPSGEVRLISKNCSATVGQVGNVGVNQKSLGRAGSKCWLGKRPVVRGVVMNPVDHPHGGGEGRAPIGRKKPVTPWGYPALGRRTRKRKKYSETLILRRRSK.

Residues 1-15 (MAINLYKTSTPSTRN) show a composition bias toward polar residues. Disordered regions lie at residues 1–22 (MAIN…DSQV) and 225–274 (PVDH…RRSK).

The protein belongs to the universal ribosomal protein uL2 family. Part of the 50S ribosomal subunit.

The protein resides in the plastid. The protein localises to the chloroplast. This Lobularia maritima (Sweet alyssum) protein is Large ribosomal subunit protein uL2cz/uL2cy (rpl2-A).